The primary structure comprises 273 residues: Dermonecrotic toxin LspaSicTox-alphaIA2iv (273 aa).

His-5 is an active-site residue. Residues Glu-25 and Asp-27 each coordinate Mg(2+). Residue His-41 is the Nucleophile of the active site. Intrachain disulfides connect Cys-45–Cys-51 and Cys-47–Cys-190. Asp-85 contacts Mg(2+).

The protein belongs to the arthropod phospholipase D family. Class II subfamily. Requires Mg(2+) as cofactor. In terms of tissue distribution, expressed by the venom gland.

The protein resides in the secreted. The enzyme catalyses an N-(acyl)-sphingosylphosphocholine = an N-(acyl)-sphingosyl-1,3-cyclic phosphate + choline. The catalysed reaction is an N-(acyl)-sphingosylphosphoethanolamine = an N-(acyl)-sphingosyl-1,3-cyclic phosphate + ethanolamine. It carries out the reaction a 1-acyl-sn-glycero-3-phosphocholine = a 1-acyl-sn-glycero-2,3-cyclic phosphate + choline. It catalyses the reaction a 1-acyl-sn-glycero-3-phosphoethanolamine = a 1-acyl-sn-glycero-2,3-cyclic phosphate + ethanolamine. Dermonecrotic toxins cleave the phosphodiester linkage between the phosphate and headgroup of certain phospholipids (sphingolipid and lysolipid substrates), forming an alcohol (often choline) and a cyclic phosphate. This toxin acts on sphingomyelin (SM). It may also act on ceramide phosphoethanolamine (CPE), lysophosphatidylcholine (LPC) and lysophosphatidylethanolamine (LPE), but not on lysophosphatidylserine (LPS), and lysophosphatidylglycerol (LPG). It acts by transphosphatidylation, releasing exclusively cyclic phosphate products as second products. Induces dermonecrosis, hemolysis, increased vascular permeability, edema, inflammatory response, and platelet aggregation. The sequence is that of Dermonecrotic toxin LspaSicTox-alphaIA2iv from Loxosceles spadicea (Recluse spider).